We begin with the raw amino-acid sequence, 57 residues long: Large ribosomal subunit protein bL32 (57 aa).

The interval 1 to 38 (MAVQQNKPTRSKRGMRRSHDALTAVTSLSVDQTSGEKH) is disordered. Polar residues predominate over residues 24–33 (AVTSLSVDQT).

This sequence belongs to the bacterial ribosomal protein bL32 family.

This is Large ribosomal subunit protein bL32 from Enterobacter sp. (strain 638).